A 102-amino-acid polypeptide reads, in one-letter code: NADH-quinone oxidoreductase subunit K 2 (102 aa).

The next 3 helical transmembrane spans lie at 5-25 (FEHV…CVLV), 30-50 (LIML…AFVG), and 65-85 (LIIM…VVYL).

It belongs to the complex I subunit 4L family. As to quaternary structure, NDH-1 is composed of 14 different subunits. Subunits NuoA, H, J, K, L, M, N constitute the membrane sector of the complex.

Its subcellular location is the cell inner membrane. The enzyme catalyses a quinone + NADH + 5 H(+)(in) = a quinol + NAD(+) + 4 H(+)(out). In terms of biological role, NDH-1 shuttles electrons from NADH, via FMN and iron-sulfur (Fe-S) centers, to quinones in the respiratory chain. The immediate electron acceptor for the enzyme in this species is believed to be ubiquinone. Couples the redox reaction to proton translocation (for every two electrons transferred, four hydrogen ions are translocated across the cytoplasmic membrane), and thus conserves the redox energy in a proton gradient. This Geobacter sulfurreducens (strain ATCC 51573 / DSM 12127 / PCA) protein is NADH-quinone oxidoreductase subunit K 2.